Consider the following 151-residue polypeptide: Large ribosomal subunit protein uL15 (151 aa).

Residues 1–60 are disordered; it reads MAENNPLKIHNLRPAPGAKTAKTRVGRGEASKGKTAGRGTKGTKARYQVPERFEGGQMPL.

This sequence belongs to the universal ribosomal protein uL15 family. In terms of assembly, part of the 50S ribosomal subunit.

Functionally, binds to the 23S rRNA. The protein is Large ribosomal subunit protein uL15 of Streptomyces coelicolor (strain ATCC BAA-471 / A3(2) / M145).